The primary structure comprises 498 residues: ATP synthase subunit beta, chloroplastic (498 aa).

Gly-172–Thr-179 contacts ATP.

Belongs to the ATPase alpha/beta chains family. As to quaternary structure, F-type ATPases have 2 components, CF(1) - the catalytic core - and CF(0) - the membrane proton channel. CF(1) has five subunits: alpha(3), beta(3), gamma(1), delta(1), epsilon(1). CF(0) has four main subunits: a(1), b(1), b'(1) and c(9-12).

Its subcellular location is the plastid. It localises to the chloroplast thylakoid membrane. The catalysed reaction is ATP + H2O + 4 H(+)(in) = ADP + phosphate + 5 H(+)(out). In terms of biological role, produces ATP from ADP in the presence of a proton gradient across the membrane. The catalytic sites are hosted primarily by the beta subunits. This Atropa belladonna (Belladonna) protein is ATP synthase subunit beta, chloroplastic.